Consider the following 427-residue polypeptide: Serine--tRNA ligase (427 aa).

Residue 235 to 237 (TAE) coordinates L-serine. ATP-binding positions include 266–268 (RRE) and V282. L-serine is bound at residue E289. ATP is bound at residue 353–356 (EASS). S389 contributes to the L-serine binding site.

It belongs to the class-II aminoacyl-tRNA synthetase family. Type-1 seryl-tRNA synthetase subfamily. Homodimer. The tRNA molecule binds across the dimer.

The protein localises to the cytoplasm. It carries out the reaction tRNA(Ser) + L-serine + ATP = L-seryl-tRNA(Ser) + AMP + diphosphate + H(+). The catalysed reaction is tRNA(Sec) + L-serine + ATP = L-seryl-tRNA(Sec) + AMP + diphosphate + H(+). Its pathway is aminoacyl-tRNA biosynthesis; selenocysteinyl-tRNA(Sec) biosynthesis; L-seryl-tRNA(Sec) from L-serine and tRNA(Sec): step 1/1. Functionally, catalyzes the attachment of serine to tRNA(Ser). Is also able to aminoacylate tRNA(Sec) with serine, to form the misacylated tRNA L-seryl-tRNA(Sec), which will be further converted into selenocysteinyl-tRNA(Sec). This is Serine--tRNA ligase from Chlorobium phaeobacteroides (strain BS1).